A 155-amino-acid polypeptide reads, in one-letter code: uncharacterized protein (155 aa).

It belongs to the IIV-6 145L family.

This is an uncharacterized protein from Acheta domesticus (House cricket).